Here is a 416-residue protein sequence, read N- to C-terminus: LysM domain-containing GPI-anchored protein 1 (416 aa).

The N-terminal stretch at Met1–Ala27 is a signal peptide. 4 cysteine pairs are disulfide-bonded: Cys34–Cys100, Cys40–Cys163, Cys98–Cys161, and Cys100–Cys163. Asn37 carries N-linked (GlcNAc...) asparagine glycosylation. Positions Thr110–Ile157 constitute a LysM 1 domain. A glycan (N-linked (GlcNAc...) asparagine) is linked at Asn165. In terms of domain architecture, LysM 2 spans Leu176 to Val219. 2 disulfides stabilise this stretch: Cys224–Cys256 and Cys251–Cys279. Asn241 carries N-linked (GlcNAc...) asparagine glycosylation. Asn288, Asn299, and Asn310 each carry an N-linked (GlcNAc...) asparagine glycan. Residues Asp356–Leu376 form a disordered region. Residue Ala391 is the site of GPI-anchor amidated alanine attachment. Residues Ser392–Ser416 constitute a propeptide, removed in mature form.

As to quaternary structure, interacts with peptidoglycans.

Its subcellular location is the cell membrane. It localises to the secreted. Required as a cell surface receptor for peptidoglycan (PGN) elicitor signaling leading to innate immunity. Plays an essential role in detecting PGNs and restricting bacterial growth (of Pseudomonas syringae pv. tomato DC3000 for example). The polypeptide is LysM domain-containing GPI-anchored protein 1 (LYM1) (Arabidopsis thaliana (Mouse-ear cress)).